A 119-amino-acid chain; its full sequence is Small ribosomal subunit protein bS6 (119 aa).

Positions V96–A119 are disordered.

Belongs to the bacterial ribosomal protein bS6 family.

Binds together with bS18 to 16S ribosomal RNA. The sequence is that of Small ribosomal subunit protein bS6 from Alkalilimnicola ehrlichii (strain ATCC BAA-1101 / DSM 17681 / MLHE-1).